A 2084-amino-acid polypeptide reads, in one-letter code: MSDQQKASLCPRLVDYMAIVGAHTTPPMPKGLQGLKAPPVQVPDLLRRYPPSDHADFPLPLDMVYFCQPEGCTSVGPRRTGSAIRDMTSFVFALTDKDSGKTRYGICVNFYRPIERPSSAAGSAGAGNDRPGNGGPGGHGGGAGGGAGGGGRGGRRSSAFRRESWRKSMERSSDSAFSSDYRSNVAPSDSDRELTSRRDSDQQRLHSHHSHHQPHHPSASPAVPKLGLMAPSADSESGGSHSPSPRASRKRTKLRNQSLTSLCIISHHPFFTTFRECLFILKKLIDACNESSSPKRVGASQKINRDNVWTVLTGHVSDATPSIVLHDVREIETWILRLLSTPVPVPGSTRVEVEVLSPTVHEPLLFALPDHTRFSLVDFPLHLPLELLGVETCLKVWTLIMQENKVLFQSRDYNALSMSVMAFVTMLYPLEYMFPVIPLLPTCLSCAEQLLLAPTPFVIGVPASFLVYKKNFRLPDDIWVVDLDSTKLTPPTGGYEEIPPLPEPEGTILKNHLKQALTSMTATNTAVSSQQLLPSVRDSLQEPPLLGVSQVRLPLQTPPHSAQASQRNSMSAQGTISSRQPSPMNSPALNPFVYGTDVDSVDVATRVAMVRFFNAQNTLANFAEHTRTLRLYPRPVVAFQINSFLRSRPRASQFLNQFARTQAVEFLAEWSLTPTNVAFLRVQTGVMDPMQVGDKPKWFAHALTPIRFSVWDDGSSLNGALRSLKQLECQPTDESGSDSEGADSSSSSYSSLSDFVSEMASSDLSPSLHDVFGSYNRPHVVPQTLSSNLDPALVYHPPSKLQYPEGIADAVASKEEEDEERADSPVSSSSSRSDLSSPSFNRDSEFDFQPKGGQTLGSTTVGSGAAAPSFELATPLAMRLEATIKMASIEQESDTVSTATGKTIAAGSKLQRHPSDSESRPEKKIPPPLTPPVKQPGVSNILARTGSSGSSSSSPGRQSSQSSLFENFASHAKELVRETTRQSSQEGLLAHVDKFTLHAKKAAGEASKQALEVSKQAAGVSKNTLEDLTYVGKSTLGDLTKTAKEAATKKGIIKIEEHSAGGAGPPPKSPGSQLATHKQVQQSGGQGGGNNFFSAIGTDFNGLASSTSTMFSGMFGKKSQQKQVPVQQKQPNVSAGKAKSGINFDPFPGRKGLVERTPLIKHSGPRQTQEELTRQQNQERSHSNAENQTFLKDVTNQVLAGEGVGWLKLNRFKKLMEDESYRTLVLSKLNKTLDKKIAPDDHIDDVCVTKPVWKGMLKCIQAIAGGLDVTFANFGLGGMASVFQLMEVAHTHYWSKEINEGSDMSSSLLSSHAASPMGSRENLRSPSSPNGSHSALGSEWASPQESRKSSTQLAHGGPGGSHSGAPINRRLSSADSQDGQSTTEMFKDMLSQKRSALKNMLTSFDSDTTTSKDSKKSSGNLWSGKSTLSAGFRYTGGHLINTSSSPSPDSPRVYLFEGLLGKDRLNLWNQMQFWEDAFLDAVSQERDMIGMDQGPIEMMERYKSLSESERKRLEHDEDRLLSTMLYNLTAILVMLNVAKDEIRRKIRRLLGKSHIGLVYSQEVHNVVDQINNLNGNDIDLKPLGSRLLHRQSFTVHQGTDVNGPLRFMEVRDDGLVLRSVDGTIVERWWYERLVNMTYSPKTKLLCLWRRNGGQTQLHKYYTRKCKELYNCIKEAMERGGTPTNVPELGGEFPVQDMNTGEGGLLQVCLEGVGLLFSNSKFFVRLDHIRKCFTQKGGIFVLEEYNPKTRNLIQRKYQSSMSDQICYSVLCVFSYVAAGQDQKKNPVVITPQIQDIHAQQKQKHQQQQQHQQPQQQQQPHQTTTQQNQPTAVASAVPTTTAPAGQVNPNRMTAKSQAGSISIRHTVPMQKPTITMSTVQPQARMPAQVATASVPVTVPVPPTPAPPTSNPAKLPQLPPRVPSQPSTESLASISSPPPKLRTPMSAPPGPPPAIPPRTGAISRSGSVPAARSFVRQASANSTPPQYTPQPPPPFVIPKRHSGLARASTLSSSTSPSMSSSSASNHPGHSQSQQRASHGSVAAVLQSMPEAEPGYGSGSGSISGSSSGSGSASGSIASASPQAHRKH.

The uDENN domain occupies 25–352 (TPPMPKGLQG…VPVPGSTRVE (328 aa)). Residues 117 to 253 (PSSAAGSAGA…SPRASRKRTK (137 aa)) form a disordered region. A compositionally biased stretch (low complexity) spans 118–131 (SSAAGSAGAGNDRP). Residues 132–152 (GNGGPGGHGGGAGGGAGGGGR) are compositionally biased toward gly residues. The span at 160–173 (FRRESWRKSMERSS) shows a compositional bias: basic and acidic residues. Residues 174–183 (DSAFSSDYRS) show a composition bias toward low complexity. The segment covering 189–204 (DSDRELTSRRDSDQQR) has biased composition (basic and acidic residues). Residues 205 to 215 (LHSHHSHHQPH) show a composition bias toward basic residues. A compositionally biased stretch (polar residues) spans 234–245 (DSESGGSHSPSP). A cDENN domain is found at 373–514 (RFSLVDFPLH…EGTILKNHLK (142 aa)). Positions 516–678 (ALTSMTATNT…EWSLTPTNVA (163 aa)) constitute a dDENN domain. 7 disordered regions span residues 557 to 588 (TPPH…NSPA), 730 to 749 (QPTD…SSSY), 811 to 863 (VASK…TVGS), 891 to 963 (QESD…SQSS), 1058 to 1092 (HSAG…GNNF), 1115 to 1188 (FGKK…AENQ), and 1305 to 1382 (SSSL…GQST). A compositionally biased stretch (polar residues) spans 558-588 (PPHSAQASQRNSMSAQGTISSRQPSPMNSPA). Positions 824–839 (SPVSSSSSRSDLSSPS) are enriched in low complexity. Residues 913-925 (HPSDSESRPEKKI) show a composition bias toward basic and acidic residues. Over residues 946-963 (GSSGSSSSSPGRQSSQSS) the composition is skewed to low complexity. Low complexity predominate over residues 1121-1131 (QKQVPVQQKQP). The segment covering 1168–1183 (TQEELTRQQNQERSHS) has biased composition (basic and acidic residues). Over residues 1305–1315 (SSSLLSSHAAS) the composition is skewed to low complexity. Polar residues-rich tracts occupy residues 1324 to 1353 (RSPS…STQL) and 1370 to 1382 (RLSS…GQST). Residues 1490 to 1565 (GMDQGPIEMM…GLVYSQEVHN (76 aa)) enclose the Death domain. Residues 1794–1842 (DIHAQQKQKHQQQQQHQQPQQQQQPHQTTTQQNQPTAVASAVPTTTAPA) show a composition bias toward low complexity. 2 disordered regions span residues 1794–1865 (DIHA…RHTV) and 1896–2084 (VPVP…HRKH). Positions 1845-1858 (VNPNRMTAKSQAGS) are enriched in polar residues. Positions 1896–1907 (VPVPPTPAPPTS) are enriched in pro residues. Positions 1921-1932 (SQPSTESLASIS) are enriched in polar residues. Pro residues-rich tracts occupy residues 1933–1953 (SPPP…PAIP) and 1983–1993 (QYTPQPPPPFV). Low complexity-rich tracts occupy residues 2001 to 2029 (LARA…HSQS) and 2059 to 2077 (ISGS…ASAS).

The protein belongs to the MADD family.

The protein localises to the cell membrane. It localises to the cytoplasm. Its function is as follows. Guanyl-nucleotide exchange factor that regulates small GTPases. Converts GDP-bound inactive form of Rab3 to the GTP-bound active forms. The protein is MAP kinase-activating death domain protein of Drosophila melanogaster (Fruit fly).